The primary structure comprises 347 residues: GMP reductase (347 aa).

Residue 108–131 (ADFEKTKQILDLNPALNFVCIDVA) participates in NADP(+) binding. Glycine 181 and glycine 183 together coordinate K(+). The active-site Thioimidate intermediate is cysteine 186. An NADP(+)-binding site is contributed by 216 to 239 (IVSDGGCTTPGDVAKAFGGGADFV).

Belongs to the IMPDH/GMPR family. GuaC type 1 subfamily. As to quaternary structure, homotetramer.

The enzyme catalyses IMP + NH4(+) + NADP(+) = GMP + NADPH + 2 H(+). Functionally, catalyzes the irreversible NADPH-dependent deamination of GMP to IMP. It functions in the conversion of nucleobase, nucleoside and nucleotide derivatives of G to A nucleotides, and in maintaining the intracellular balance of A and G nucleotides. In Escherichia coli O7:K1 (strain IAI39 / ExPEC), this protein is GMP reductase.